Reading from the N-terminus, the 534-residue chain is Phenylalanine N-monooxygenase CYP79D16 (534 aa).

Residues 1–21 form the signal peptide; it reads MEANVGFLTLCLAITLVRFLM. Cys-472 provides a ligand contact to heme. N-linked (GlcNAc...) asparagine glycosylation is present at Asn-500.

It belongs to the cytochrome P450 family. Requires heme as cofactor. As to expression, expressed in seedlings.

The catalysed reaction is L-phenylalanine + 2 reduced [NADPH--hemoprotein reductase] + 2 O2 = (E)-phenylacetaldehyde oxime + 2 oxidized [NADPH--hemoprotein reductase] + CO2 + 3 H2O + 2 H(+). Its function is as follows. Involved in L-phenylalanine-derived cyanogenic glycoside biosynthesis, including prunasin and amygdalin defensive agents. Catalyzes the conversion of L-phenylalanine (Phe) into phenylacetaldoxime (PAOx). Cannot use tyrosine (Tyr), tryptophan (Trp) and valine (Val) as substrates. The polypeptide is Phenylalanine N-monooxygenase CYP79D16 (Prunus mume (Japanese apricot)).